Consider the following 220-residue polypeptide: Deoxyribose-phosphate aldolase (220 aa).

Asp89 functions as the Proton donor/acceptor in the catalytic mechanism. Lys151 acts as the Schiff-base intermediate with acetaldehyde in catalysis. The active-site Proton donor/acceptor is the Lys180.

It belongs to the DeoC/FbaB aldolase family. DeoC type 1 subfamily.

The protein resides in the cytoplasm. It catalyses the reaction 2-deoxy-D-ribose 5-phosphate = D-glyceraldehyde 3-phosphate + acetaldehyde. The protein operates within carbohydrate degradation; 2-deoxy-D-ribose 1-phosphate degradation; D-glyceraldehyde 3-phosphate and acetaldehyde from 2-deoxy-alpha-D-ribose 1-phosphate: step 2/2. In terms of biological role, catalyzes a reversible aldol reaction between acetaldehyde and D-glyceraldehyde 3-phosphate to generate 2-deoxy-D-ribose 5-phosphate. In Staphylococcus carnosus (strain TM300), this protein is Deoxyribose-phosphate aldolase.